Consider the following 89-residue polypeptide: Large ribosomal subunit protein bL27 (89 aa).

Positions 1–21 are disordered; the sequence is MAHKKSGGSSSNGRDSESKRL.

It belongs to the bacterial ribosomal protein bL27 family.

The protein is Large ribosomal subunit protein bL27 of Caulobacter vibrioides (strain NA1000 / CB15N) (Caulobacter crescentus).